The chain runs to 104 residues: Large ribosomal subunit protein uL24 (104 aa).

The protein belongs to the universal ribosomal protein uL24 family. As to quaternary structure, part of the 50S ribosomal subunit.

In terms of biological role, one of two assembly initiator proteins, it binds directly to the 5'-end of the 23S rRNA, where it nucleates assembly of the 50S subunit. Its function is as follows. One of the proteins that surrounds the polypeptide exit tunnel on the outside of the subunit. The sequence is that of Large ribosomal subunit protein uL24 from Cronobacter sakazakii (strain ATCC BAA-894) (Enterobacter sakazakii).